The primary structure comprises 426 residues: Glutamyl-tRNA reductase (426 aa).

Residues 49-52 (TCNR), serine 109, 114-116 (EGQ), and glutamine 120 contribute to the substrate site. Catalysis depends on cysteine 50, which acts as the Nucleophile. 189 to 194 (GAGETG) provides a ligand contact to NADP(+).

This sequence belongs to the glutamyl-tRNA reductase family. As to quaternary structure, homodimer.

It catalyses the reaction (S)-4-amino-5-oxopentanoate + tRNA(Glu) + NADP(+) = L-glutamyl-tRNA(Glu) + NADPH + H(+). Its pathway is porphyrin-containing compound metabolism; protoporphyrin-IX biosynthesis; 5-aminolevulinate from L-glutamyl-tRNA(Glu): step 1/2. The protein operates within porphyrin-containing compound metabolism; chlorophyll biosynthesis. Functionally, catalyzes the NADPH-dependent reduction of glutamyl-tRNA(Glu) to glutamate 1-semialdehyde (GSA). The chain is Glutamyl-tRNA reductase from Chlorobium phaeobacteroides (strain BS1).